The sequence spans 109 residues: Archaeosine synthase (109 aa).

Catalysis depends on Cys-21, which acts as the Thioimide intermediate. The active-site Proton donor/acceptor is Asp-28. Substrate-binding positions include Asp-28, 43 to 46 (LAIE), and 62 to 63 (HE).

It belongs to the archaeosine synthase type 2 family. As to quaternary structure, forms a symmetric tunnel-fold (T-fold) homodecamer of two head-to-head facing pentameric subunits, with 10 active sites at the intermonomer interfaces.

The catalysed reaction is 7-cyano-7-carbaguanosine(15) in tRNA + NH4(+) = archaeosine(15) in tRNA. Its pathway is tRNA modification; archaeosine-tRNA biosynthesis. In terms of biological role, is responsible for the final step in the biosynthesis of archaeosine, a modified nucleoside present in the dihydrouridine loop (D-loop) of archaeal tRNA. Catalyzes the conversion of 7-cyano-7-deazaguanine (preQ0)-modified tRNA to archaeosine-tRNA, transforming a nitrile group to a formamidine group. Can use neither glutamine nor asparagine as amino donor in vitro, is only able to utilize free ammonium. However, the enzyme might function in vivo with a partner that serves to generate ammonium. The protein is Archaeosine synthase of Pyrobaculum calidifontis (strain DSM 21063 / JCM 11548 / VA1).